The sequence spans 1055 residues: Ubiquitin carboxyl-terminal hydrolase 25 (1055 aa).

Residues 14–57 (QKHQQTFLNQLREITGINDTQILQQALKDSNGNLELAVAFLTAK) form the UBA-like domain. The interval 77-102 (NDRYISVGSQADTNVIDLTGDDKDDL) is SUMO interaction domain (SIM). Ser-85 carries the post-translational modification Phosphoserine. The Required for SUMO paralog-specific binding signature appears at 89–95 (TNVIDLT). UIM domains lie at 97–116 (DDKD…SNRA) and 123–140 (TDEE…IAEN). Residue Lys-99 forms a Glycyl lysine isopeptide (Lys-Gly) (interchain with G-Cter in SUMO); alternate linkage. Lys-99 participates in a covalent cross-link: Glycyl lysine isopeptide (Lys-Gly) (interchain with G-Cter in ubiquitin); alternate. A USP domain is found at 169–657 (VGLKNVGNTC…SAYCLMYIND (489 aa)). Residue Cys-178 is part of the active site. Residues 464-507 (VCTSPVDDIDASSPPSGSIPSQTLPSTTEQQGALSSELPSTSPS) are disordered. The segment covering 476-496 (SPPSGSIPSQTLPSTTEQQGA) has biased composition (polar residues). The segment covering 497–507 (LSSELPSTSPS) has biased composition (low complexity). The stretch at 541-578 (TEEELSVLESCLHRWRTEIENDTRDLQESISRIHRTIE) forms a coiled coil. Catalysis depends on residues His-599 and His-607. Residues 684-717 (DLRDFVEEDNQRFEKELEEWDAQLAQKALQEKLL) adopt a coiled-coil conformation. Residues 727–749 (TSVTTAQAAGDPEYLEQPSRSDF) form a disordered region. Phosphotyrosine is present on Tyr-740.

It belongs to the peptidase C19 family. Homotetramer, inhibited form. Homodimer, active form. Interacts with ACTA1 (via its C-terminus); the interaction occurs for all isoforms but is strongest for isoform USP25m in muscle differentiating cells. Interacts (isoform USP25m only) with MYBPC1; the interaction prevents proteasomal degradation of MYBPC1. Interacts (isoform USP25m only) with FLNC (via filament repeats 17-18, 20-21 and 24). Interacts with GAPDH. Interacts with SUMO3; the interaction sumoylates efficiently USP25. Interacts with SUMO2; the interaction sumoylates efficiently USP25. Interacts with SUMO1; the interaction only weakly sumoylates USP25. Interacts with SYK; phosphorylates USP25 and regulates USP25 intracellular levels. Post-translationally, acetylated. In terms of processing, sumoylation impairs binding to and hydrolysis of ubiquitin chains. Sumoylated preferentially with SUMO2 or SUMO3. Desumoylated by SENP1. Polyubiquitinated by SMURF1 by promoting the 'Lys-48'-linkage leading to proteasomal degradation. Preferentially monoubiquitinated but can also be polyubiquitinated. Autodeubiquitinated. Ubiquitination activates the enzymatic activity either by preventing sumoylation or by allowing novel interactions. Post-translationally, phosphorylation in the C-terminal by SYK regulates USP25 cellular levels. Isoform USP25a is found in most adult and fetal tissues; expression is moderately high in testis, pancreas, kidney, skeletal muscle, liver, lung, placenta, heart, but very low in peripheral blood, colon, small intestine, ovary, prostate, thymus and spleen. Expressed in the brain, with high levels in the cerebral cortex. Isoform USP25b is found in all tissues except heart and skeletal muscle. Isoform USP25m is heart and skeletal muscle specific.

The protein localises to the cytoplasm. It is found in the nucleus. The enzyme catalyses Thiol-dependent hydrolysis of ester, thioester, amide, peptide and isopeptide bonds formed by the C-terminal Gly of ubiquitin (a 76-residue protein attached to proteins as an intracellular targeting signal).. In terms of biological role, deubiquitinating enzyme that hydrolyzes ubiquitin moieties conjugated to substrates and thus, functions in various biological processes including inflammation and immune response. Modulates the Wnt/beta-catenin pathway by deubiquitinating and stabilizing tankyrases TNKS1 and TNKS2. Regulates KEAP1-NRF2 axis in the defense against oxidative assaults by deubiquitinating KEAP1 and protecting it from degradation leading to degradation of the NRF2 transcription factor that is responsible for mounting an anti-oxidation gene expression program. Positively regulates RNA virus-induced innate signaling by interacting with and deubiquitinating ERLIN1 and ERLIN2. In turn, restricts virus production by regulating cholesterol biosynthetic flux. Acts as a negative regulator of interleukin-17-mediated signaling and inflammation through the removal of 'Lys-63'-linked ubiquitination of TRAF5 and TRAF6. Prevents the ubiquitination and degradation of TRAF3 to reduce the phosphorylation levels of JNK and P38, the secretion of IL-1B and to induce endotoxin tolerance. Functionally, the muscle-specific isoform (USP25m) may have a role in the regulation of muscular differentiation and function. This is Ubiquitin carboxyl-terminal hydrolase 25 (USP25) from Homo sapiens (Human).